The sequence spans 94 residues: Co-chaperonin GroES (94 aa).

Belongs to the GroES chaperonin family. In terms of assembly, heptamer of 7 subunits arranged in a ring. Interacts with the chaperonin GroEL.

The protein localises to the cytoplasm. Functionally, together with the chaperonin GroEL, plays an essential role in assisting protein folding. The GroEL-GroES system forms a nano-cage that allows encapsulation of the non-native substrate proteins and provides a physical environment optimized to promote and accelerate protein folding. GroES binds to the apical surface of the GroEL ring, thereby capping the opening of the GroEL channel. The polypeptide is Co-chaperonin GroES (Clostridium novyi (strain NT)).